Consider the following 468-residue polypeptide: Eukaryotic translation initiation factor 3 subunit M (468 aa).

The interval 42–61 (PLIEPLRQQEQSEEEPDRKQ) is disordered. The PCI domain occupies 206-377 (DLELAQTHVV…SEFLVHRATY (172 aa)). The disordered stretch occupies residues 418–468 (MQAAAEETGQGKSGDKGAKGGDRRRNPQQQQQSQPSQPQQAREVELVGGAE). Residues 430-442 (SGDKGAKGGDRRR) show a composition bias toward basic and acidic residues. Over residues 444–457 (PQQQQQSQPSQPQQ) the composition is skewed to low complexity.

This sequence belongs to the eIF-3 subunit M family. As to quaternary structure, component of the eukaryotic translation initiation factor 3 (eIF-3) complex.

Its subcellular location is the cytoplasm. Component of the eukaryotic translation initiation factor 3 (eIF-3) complex, which is involved in protein synthesis of a specialized repertoire of mRNAs and, together with other initiation factors, stimulates binding of mRNA and methionyl-tRNAi to the 40S ribosome. The eIF-3 complex specifically targets and initiates translation of a subset of mRNAs involved in cell proliferation. This is Eukaryotic translation initiation factor 3 subunit M from Neosartorya fischeri (strain ATCC 1020 / DSM 3700 / CBS 544.65 / FGSC A1164 / JCM 1740 / NRRL 181 / WB 181) (Aspergillus fischerianus).